The following is a 172-amino-acid chain: Ribosome maturation factor RimM (172 aa).

The PRC barrel domain occupies 96–168 (DGEFYYHEII…RIDVTVLEGL (73 aa)).

This sequence belongs to the RimM family. Binds ribosomal protein uS19.

It localises to the cytoplasm. In terms of biological role, an accessory protein needed during the final step in the assembly of 30S ribosomal subunit, possibly for assembly of the head region. Essential for efficient processing of 16S rRNA. May be needed both before and after RbfA during the maturation of 16S rRNA. It has affinity for free ribosomal 30S subunits but not for 70S ribosomes. The protein is Ribosome maturation factor RimM of Streptococcus mutans serotype c (strain ATCC 700610 / UA159).